The following is a 228-amino-acid chain: Large ribosomal subunit protein bL25 (228 aa).

Positions 196 to 228 are disordered; the sequence is EEAAVAEAQSAESAEGKAEAEAEATNEKNKSEA. A compositionally biased stretch (basic and acidic residues) spans 209–228; the sequence is AEGKAEAEAEATNEKNKSEA.

It belongs to the bacterial ribosomal protein bL25 family. CTC subfamily. Part of the 50S ribosomal subunit; part of the 5S rRNA/L5/L18/L25 subcomplex. Contacts the 5S rRNA. Binds to the 5S rRNA independently of L5 and L18.

Its function is as follows. This is one of the proteins that binds to the 5S RNA in the ribosome where it forms part of the central protuberance. The protein is Large ribosomal subunit protein bL25 of Methylorubrum extorquens (strain PA1) (Methylobacterium extorquens).